A 238-amino-acid polypeptide reads, in one-letter code: Orotidine 5'-phosphate decarboxylase (238 aa).

Residues aspartate 10, lysine 32, 59–68 (DLKLHDIPNT), threonine 122, arginine 184, glutamine 193, glycine 213, and arginine 214 contribute to the substrate site. Lysine 61 functions as the Proton donor in the catalytic mechanism.

Belongs to the OMP decarboxylase family. Type 1 subfamily. In terms of assembly, homodimer.

The enzyme catalyses orotidine 5'-phosphate + H(+) = UMP + CO2. It participates in pyrimidine metabolism; UMP biosynthesis via de novo pathway; UMP from orotate: step 2/2. Functionally, catalyzes the decarboxylation of orotidine 5'-monophosphate (OMP) to uridine 5'-monophosphate (UMP). The protein is Orotidine 5'-phosphate decarboxylase of Bacillus cereus (strain AH187).